A 309-amino-acid polypeptide reads, in one-letter code: THAP domain-containing protein 7 (309 aa).

The THAP-type zinc finger occupies 1–93 (MPRHCSAAGC…LKEGAVPTIF (93 aa)). Ser162 carries the phosphoserine modification. The segment at 176-210 (SDLLGPLGAQADEAGCSTQPSPEQHPSPLEPQPAS) is disordered. Residues 198–209 (EQHPSPLEPQPA) show a composition bias toward pro residues. Residue Ser210 is modified to Phosphoserine. The HCFC1-binding motif (HBM) signature appears at 229–232 (EHSY).

Forms homodimers. Interacts with HDAC3 and nuclear hormone receptor corepressors. Interacts via HBM with HCFC1.

It localises to the nucleus. The protein resides in the chromosome. Its function is as follows. Chromatin-associated, histone tail-binding protein that represses transcription via recruitment of HDAC3 and nuclear hormone receptor corepressors. The sequence is that of THAP domain-containing protein 7 (Thap7) from Mus musculus (Mouse).